The following is a 101-amino-acid chain: Phosphoprotein OPG062 (101 aa).

A disordered region spans residues 50–73 (KPSSPTCERRPSSPSRCERMNNPG). Positions 56 to 68 (CERRPSSPSRCER) are enriched in basic and acidic residues.

Belongs to the orthopoxvirus OPG062 family. In terms of assembly, self-associates to form high molecular-weight forms. Interacts with protein OPG157. Interacts with host RICTOR and RPTOR; these interactions disrupt the mTORC1 and mTORC2 crosstalk.

Its subcellular location is the virion. Plays an essential role in virion assembly and morphogenesis. Also plays a role in the inhibition of host immune response by dysregulating mTOR. Sequesters host RICTOR and RPTOR, thereby disrupting mTORC1 and mTORC2 crosstalk. In turn, blocks the host antiviral response in part through mTOR-dependent degradation of cGAS, the primary poxvirus sensor. In Monkeypox virus, this protein is Phosphoprotein OPG062 (OPG062).